Reading from the N-terminus, the 370-residue chain is tRNA 2-selenouridine synthase (370 aa).

A Rhodanese domain is found at 12 to 136; that stretch reads FLEDVPMMDT…MRNFLLDTTR (125 aa). The active-site S-selanylcysteine intermediate is the Cys95.

It belongs to the SelU family. As to quaternary structure, monomer.

The enzyme catalyses 5-methylaminomethyl-2-thiouridine(34) in tRNA + selenophosphate + (2E)-geranyl diphosphate + H2O + H(+) = 5-methylaminomethyl-2-selenouridine(34) in tRNA + (2E)-thiogeraniol + phosphate + diphosphate. It carries out the reaction 5-methylaminomethyl-2-thiouridine(34) in tRNA + (2E)-geranyl diphosphate = 5-methylaminomethyl-S-(2E)-geranyl-thiouridine(34) in tRNA + diphosphate. It catalyses the reaction 5-methylaminomethyl-S-(2E)-geranyl-thiouridine(34) in tRNA + selenophosphate + H(+) = 5-methylaminomethyl-2-(Se-phospho)selenouridine(34) in tRNA + (2E)-thiogeraniol. The catalysed reaction is 5-methylaminomethyl-2-(Se-phospho)selenouridine(34) in tRNA + H2O = 5-methylaminomethyl-2-selenouridine(34) in tRNA + phosphate. Involved in the post-transcriptional modification of the uridine at the wobble position (U34) of tRNA(Lys), tRNA(Glu) and tRNA(Gln). Catalyzes the conversion of 2-thiouridine (S2U-RNA) to 2-selenouridine (Se2U-RNA). Acts in a two-step process involving geranylation of 2-thiouridine (S2U) to S-geranyl-2-thiouridine (geS2U) and subsequent selenation of the latter derivative to 2-selenouridine (Se2U) in the tRNA chain. This is tRNA 2-selenouridine synthase from Azotobacter vinelandii (strain DJ / ATCC BAA-1303).